Reading from the N-terminus, the 491-residue chain is UDP-N-acetylmuramate--L-alanine ligase (491 aa).

115–121 contributes to the ATP binding site; sequence GTHGKTT.

Belongs to the MurCDEF family.

The protein localises to the cytoplasm. The catalysed reaction is UDP-N-acetyl-alpha-D-muramate + L-alanine + ATP = UDP-N-acetyl-alpha-D-muramoyl-L-alanine + ADP + phosphate + H(+). The protein operates within cell wall biogenesis; peptidoglycan biosynthesis. In terms of biological role, cell wall formation. This chain is UDP-N-acetylmuramate--L-alanine ligase, found in Parvibaculum lavamentivorans (strain DS-1 / DSM 13023 / NCIMB 13966).